We begin with the raw amino-acid sequence, 29 residues long: Glucagon (29 aa).

The protein belongs to the glucagon family.

It localises to the secreted. Glucagon plays a key role in glucose metabolism and homeostasis. Regulates blood glucose by increasing gluconeogenesis and decreasing glycolysis. In Polypterus senegalus (Senegal bichir), this protein is Glucagon (gcg).